The sequence spans 66 residues: DNA-directed RNA polymerase subunit omega (66 aa).

This sequence belongs to the RNA polymerase subunit omega family. The RNAP catalytic core consists of 2 alpha, 1 beta, 1 beta' and 1 omega subunit. When a sigma factor is associated with the core the holoenzyme is formed, which can initiate transcription.

It carries out the reaction RNA(n) + a ribonucleoside 5'-triphosphate = RNA(n+1) + diphosphate. Its function is as follows. Promotes RNA polymerase assembly. Latches the N- and C-terminal regions of the beta' subunit thereby facilitating its interaction with the beta and alpha subunits. This chain is DNA-directed RNA polymerase subunit omega, found in Clostridium botulinum (strain Eklund 17B / Type B).